Reading from the N-terminus, the 252-residue chain is Putative teichuronic acid biosynthesis glycosyltransferase TuaG (252 aa).

The protein belongs to the glycosyltransferase 2 family.

It functions in the pathway cell wall biogenesis; teichuronic acid biosynthesis. This Bacillus subtilis (strain 168) protein is Putative teichuronic acid biosynthesis glycosyltransferase TuaG (tuaG).